We begin with the raw amino-acid sequence, 607 residues long: UvrABC system protein C (607 aa).

The 79-residue stretch at 16 to 94 folds into the GIY-YIG domain; that stretch reads HLPGVYRHLD…IKSLRPRYNI (79 aa). One can recognise a UVR domain in the interval 203–238; the sequence is REVMDEIEARMQQASGELRFEEAAVLRDQMGSLSKV.

Belongs to the UvrC family. Interacts with UvrB in an incision complex.

Its subcellular location is the cytoplasm. The UvrABC repair system catalyzes the recognition and processing of DNA lesions. UvrC both incises the 5' and 3' sides of the lesion. The N-terminal half is responsible for the 3' incision and the C-terminal half is responsible for the 5' incision. The polypeptide is UvrABC system protein C (Bordetella avium (strain 197N)).